The chain runs to 178 residues: Adenine phosphoribosyltransferase (178 aa).

It belongs to the purine/pyrimidine phosphoribosyltransferase family. In terms of assembly, homodimer.

It localises to the cytoplasm. It carries out the reaction AMP + diphosphate = 5-phospho-alpha-D-ribose 1-diphosphate + adenine. The protein operates within purine metabolism; AMP biosynthesis via salvage pathway; AMP from adenine: step 1/1. Functionally, catalyzes a salvage reaction resulting in the formation of AMP, that is energically less costly than de novo synthesis. This chain is Adenine phosphoribosyltransferase, found in Pseudoalteromonas atlantica (strain T6c / ATCC BAA-1087).